A 315-amino-acid polypeptide reads, in one-letter code: Probable cell division protein kinase ECU11_1290 (315 aa).

Positions 13-294 constitute a Protein kinase domain; the sequence is YEKVCRISSG…ASQGLCSGFV (282 aa). ATP is bound by residues 19–27 and K42; that span reads ISSGSFGNV. D138 serves as the catalytic Proton acceptor.

It belongs to the protein kinase superfamily. CMGC Ser/Thr protein kinase family. CDC2/CDKX subfamily.

It is found in the nucleus. It catalyses the reaction L-seryl-[protein] + ATP = O-phospho-L-seryl-[protein] + ADP + H(+). It carries out the reaction L-threonyl-[protein] + ATP = O-phospho-L-threonyl-[protein] + ADP + H(+). Its function is as follows. May play a role in the control of the eukaryotic cell cycle. This Encephalitozoon cuniculi (strain GB-M1) (Microsporidian parasite) protein is Probable cell division protein kinase ECU11_1290.